A 237-amino-acid chain; its full sequence is ATP synthase subunit a (237 aa).

The next 5 helical transmembrane spans lie at 18–38 (LTLL…VYWA), 77–97 (SLFL…GLMA), 114–134 (NIAF…VEGI), 167–187 (LALR…LLVT), and 208–230 (AFSV…MYLG).

The protein belongs to the ATPase A chain family. As to quaternary structure, F-type ATPases have 2 components, CF(1) - the catalytic core - and CF(0) - the membrane proton channel. CF(1) has five subunits: alpha(3), beta(3), gamma(1), delta(1), epsilon(1). CF(0) has three main subunits: a(1), b(2) and c(9-12). The alpha and beta chains form an alternating ring which encloses part of the gamma chain. CF(1) is attached to CF(0) by a central stalk formed by the gamma and epsilon chains, while a peripheral stalk is formed by the delta and b chains.

Its subcellular location is the cell membrane. In terms of biological role, key component of the proton channel; it plays a direct role in the translocation of protons across the membrane. The polypeptide is ATP synthase subunit a (Streptococcus gordonii (strain Challis / ATCC 35105 / BCRC 15272 / CH1 / DL1 / V288)).